The chain runs to 264 residues: tRNA pseudouridine synthase A (264 aa).

Residue D54 is the Nucleophile of the active site. Y113 serves as a coordination point for substrate.

The protein belongs to the tRNA pseudouridine synthase TruA family. In terms of assembly, homodimer.

It carries out the reaction uridine(38/39/40) in tRNA = pseudouridine(38/39/40) in tRNA. Functionally, formation of pseudouridine at positions 38, 39 and 40 in the anticodon stem and loop of transfer RNAs. This is tRNA pseudouridine synthase A from Leptospira biflexa serovar Patoc (strain Patoc 1 / Ames).